Here is a 103-residue protein sequence, read N- to C-terminus: Large ribosomal subunit protein uL24 (103 aa).

Belongs to the universal ribosomal protein uL24 family. In terms of assembly, part of the 50S ribosomal subunit.

Its function is as follows. One of two assembly initiator proteins, it binds directly to the 5'-end of the 23S rRNA, where it nucleates assembly of the 50S subunit. One of the proteins that surrounds the polypeptide exit tunnel on the outside of the subunit. The protein is Large ribosomal subunit protein uL24 of Syntrophomonas wolfei subsp. wolfei (strain DSM 2245B / Goettingen).